The chain runs to 285 residues: Bifunctional protein FolD (285 aa).

NADP(+)-binding positions include 165 to 167 and Ser190; that span reads GAS.

Belongs to the tetrahydrofolate dehydrogenase/cyclohydrolase family. Homodimer.

The catalysed reaction is (6R)-5,10-methylene-5,6,7,8-tetrahydrofolate + NADP(+) = (6R)-5,10-methenyltetrahydrofolate + NADPH. It catalyses the reaction (6R)-5,10-methenyltetrahydrofolate + H2O = (6R)-10-formyltetrahydrofolate + H(+). Its pathway is one-carbon metabolism; tetrahydrofolate interconversion. In terms of biological role, catalyzes the oxidation of 5,10-methylenetetrahydrofolate to 5,10-methenyltetrahydrofolate and then the hydrolysis of 5,10-methenyltetrahydrofolate to 10-formyltetrahydrofolate. This Cupriavidus metallidurans (strain ATCC 43123 / DSM 2839 / NBRC 102507 / CH34) (Ralstonia metallidurans) protein is Bifunctional protein FolD.